The sequence spans 276 residues: Elongation factor Ts (276 aa).

Positions 80 to 83 (TDFV) are involved in Mg(2+) ion dislocation from EF-Tu.

Belongs to the EF-Ts family.

It is found in the cytoplasm. Functionally, associates with the EF-Tu.GDP complex and induces the exchange of GDP to GTP. It remains bound to the aminoacyl-tRNA.EF-Tu.GTP complex up to the GTP hydrolysis stage on the ribosome. This chain is Elongation factor Ts, found in Acidothermus cellulolyticus (strain ATCC 43068 / DSM 8971 / 11B).